The sequence spans 553 residues: Phosphoglucomutase (553 aa).

The disordered stretch occupies residues 1-25 (MQATIKRYPTSPISGQTLGTSGLRK). Polar residues predominate over residues 11–20 (SPISGQTLGT). Substrate is bound by residues T20, R24, 117–118 (SH), and K131. The active-site Phosphoserine intermediate is the S117. Mg(2+) is bound at residue S117. Residues D289, D291, and D293 each contribute to the Mg(2+) site. Residues 293 to 294 (DR), T352, 371 to 373 (EES), K384, and R509 contribute to the substrate site.

This sequence belongs to the phosphohexose mutase family. Mg(2+) serves as cofactor.

The protein localises to the cytoplasm. The catalysed reaction is alpha-D-glucose 1-phosphate = alpha-D-glucose 6-phosphate. Catalyzes the reversible conversion of glucose 1-phosphate into glucose 6-phosphate. This enzyme participates in both the breakdown and synthesis of glucose. The chain is Phosphoglucomutase from Entamoeba histolytica (strain ATCC 30459 / HM-1:IMSS / ABRM).